We begin with the raw amino-acid sequence, 474 residues long: mRNA cap guanine-N(7) methyltransferase (474 aa).

The segment covering 1–12 has biased composition (polar residues); the sequence is MSTDSYTPSQEP. The interval 1-106 is disordered; sequence MSTDSYTPSQ…GHEGDEGDED (106 aa). Residues 56–100 show a composition bias toward basic and acidic residues; sequence SDIDGKYDKYGERRNAHTTTRDSRLDRLKRVRQKSAEREDVGHEG. An mRNA cap 0 methyltransferase domain is found at 170–474; sequence SPIYKMRNFN…FYIGFVFEKV (305 aa). 179–180 provides a ligand contact to mRNA; it reads NN. Lys183, Cys207, Asp229, Asp269, Gln299, and Tyr304 together coordinate S-adenosyl-L-methionine.

The protein belongs to the class I-like SAM-binding methyltransferase superfamily. mRNA cap 0 methyltransferase family.

It localises to the nucleus. The enzyme catalyses a 5'-end (5'-triphosphoguanosine)-ribonucleoside in mRNA + S-adenosyl-L-methionine = a 5'-end (N(7)-methyl 5'-triphosphoguanosine)-ribonucleoside in mRNA + S-adenosyl-L-homocysteine. In terms of biological role, responsible for methylating the 5'-cap structure of mRNAs. This Candida albicans (strain SC5314 / ATCC MYA-2876) (Yeast) protein is mRNA cap guanine-N(7) methyltransferase (ABD1).